The sequence spans 189 residues: GDIFYPGYCPDVKPVNDFDLSAFAGAWHEIAKLPLENENQGKCTIAEYKYDGKKASVYNSFVSNGVKEYMEGDLEIAPDAKYTKQGKYVMTFKFGQRVVNLVPWVLATDYKNYAINYNCDYHPDKKAHSIHAWILSKSKVLEGNTKEVVDNVLKTFSHLIDASKFISNDFSEAACQYSTTYSLTGPDRH.

2 cysteine pairs are disulfide-bonded: C9/C119 and C43/C175.

This sequence belongs to the calycin superfamily. Lipocalin family. In terms of assembly, homotetramer. In terms of tissue distribution, synthesized only in the caterpillars, apparently by the epidermis and secreted into the hemolymph. The protein is passed over from the larval hemolymph to that of pupae and adults and is sequestered in the eggs.

The protein localises to the secreted. This protein binds a chromophore: biliverdin IX, isomer gamma. Mixed with lipoprotein-bound carotenes, this blue protein provides hornworms with their green cryptic coloration which serves a camouflage. This Manduca sexta (Tobacco hawkmoth) protein is Insecticyanin-A (INSA).